The sequence spans 601 residues: RNA polymerase II C-terminal domain phosphatase-like 5 (601 aa).

The disordered stretch occupies residues M1 to P20. Over residues S8–P20 the composition is skewed to basic and acidic residues. FCP1 homology domains are found at residues L84–S259 and L381–E553.

Expressed in roots, seedlings, hypocotyls, cotyledons, leaves, siliques and flowers.

It is found in the nucleus. It carries out the reaction O-phospho-L-seryl-[protein] + H2O = L-seryl-[protein] + phosphate. It catalyses the reaction O-phospho-L-threonyl-[protein] + H2O = L-threonyl-[protein] + phosphate. Functionally, mediates the dephosphorylation of 'Ser-2' of the heptad repeats YSPTSPS in the C-terminal domain of the largest RNA polymerase II subunit (RPB1). This promotes the activity of RNA polymerase II. Positively regulates abscisic acid (ABA) and drought responses, including the regulation of specific genes expression. In Arabidopsis thaliana (Mouse-ear cress), this protein is RNA polymerase II C-terminal domain phosphatase-like 5.